A 562-amino-acid chain; its full sequence is Potassium voltage-gated channel subfamily V member 2 (562 aa).

Positions 1–10 are enriched in basic and acidic residues; that stretch reads MLKQSNERRW. Positions 1 to 34 are disordered; sequence MLKQSNERRWSLSYKPWSTPETEDVPNTGSNQHR. Residues 1-163 lie on the Cytoplasmic side of the membrane; it reads MLKQSNERRW…TDEYFFDRDP (163 aa). A helical membrane pass occupies residues 164-184; that stretch reads AVFQLIYNFYTSGVLLVRDEL. The Extracellular segment spans residues 185 to 269; sequence CPRSFLEELG…KPFSSVAAKA (85 aa). A helical membrane pass occupies residues 270 to 290; sequence MGVATNLFVLISVVALALNTV. Residues 291 to 344 lie on the Cytoplasmic side of the membrane; the sequence is EEMQHQAEQGTGGGDPRPILEHVEMLCVAFFTLEFLLRLASTPNLQRFARSALN. The helical transmembrane segment at 345-365 threads the bilayer; that stretch reads LVDLVAILPFYLQLLLECFTS. The Extracellular portion of the chain corresponds to 366–391; that stretch reads EDQRHNKDSPREHDLETVGRVGKVGQ. Residues 392 to 412 form a helical; Voltage-sensor membrane-spanning segment; it reads VLRIMRLMRIFRILKLARHST. At 413 to 427 the chain is on the cytoplasmic side; the sequence is GLRAFGFTLRQCYQQ. Residues 428–448 form a helical membrane-spanning segment; the sequence is VGCLMLFITMGIFSFSAAVYS. Residues 449 to 461 are Extracellular-facing; that stretch reads VEHDVPGTNFTSI. Asparagine 457 is a glycosylation site (N-linked (GlcNAc...) asparagine). An intramembrane region (pore-forming) is located at residues 462–482; sequence LHAWWWAAVSISTVGYGDMYP. The Selectivity filter signature appears at 474–479; sequence TVGYGD. The Extracellular portion of the chain corresponds to 483–488; the sequence is ETHLGR. The helical transmembrane segment at 489 to 509 threads the bilayer; it reads LFAFLCIAFGIILNGMPISIL. Residues 510–562 are Cytoplasmic-facing; that stretch reads YNKFSDYYSKLKAYEYTAIRRERGKVNFMQRATKKMAECLSESHAQSTTRQEN.

Belongs to the potassium channel family. V (TC 1.A.1.2) subfamily. Kv8.2/KCNV2 sub-subfamily. In terms of assembly, heteromultimer with KCNB1, KCNC1 and KCNF1. Does not form homomultimers.

It is found in the cell membrane. In terms of biological role, potassium channel subunit. Modulates channel activity by shifting the threshold and the half-maximal activation to more negative values. This is Potassium voltage-gated channel subfamily V member 2 (Kcnv2) from Mus musculus (Mouse).